A 348-amino-acid chain; its full sequence is Holliday junction branch migration complex subunit RuvB (348 aa).

The disordered stretch occupies residues 1 to 20 (MKPPARMVSPERRSDDVGDT). Residues 1–183 (MKPPARMVSP…FGIPIRLNFY (183 aa)) are large ATPase domain (RuvB-L). ATP is bound by residues leucine 22, arginine 23, glycine 64, lysine 67, threonine 68, threonine 69, 130 to 132 (EDF), arginine 173, tyrosine 183, and arginine 220. Mg(2+) is bound at residue threonine 68. The tract at residues 184–254 (TVEELEGIVT…IADHALSALE (71 aa)) is small ATPAse domain (RuvB-S). Residues 257 to 348 (AAGLDAMDRR…FGLFGSEDDA (92 aa)) are head domain (RuvB-H). Arginine 293, arginine 312, and arginine 317 together coordinate DNA.

Belongs to the RuvB family. Homohexamer. Forms an RuvA(8)-RuvB(12)-Holliday junction (HJ) complex. HJ DNA is sandwiched between 2 RuvA tetramers; dsDNA enters through RuvA and exits via RuvB. An RuvB hexamer assembles on each DNA strand where it exits the tetramer. Each RuvB hexamer is contacted by two RuvA subunits (via domain III) on 2 adjacent RuvB subunits; this complex drives branch migration. In the full resolvosome a probable DNA-RuvA(4)-RuvB(12)-RuvC(2) complex forms which resolves the HJ.

It localises to the cytoplasm. It carries out the reaction ATP + H2O = ADP + phosphate + H(+). Its function is as follows. The RuvA-RuvB-RuvC complex processes Holliday junction (HJ) DNA during genetic recombination and DNA repair, while the RuvA-RuvB complex plays an important role in the rescue of blocked DNA replication forks via replication fork reversal (RFR). RuvA specifically binds to HJ cruciform DNA, conferring on it an open structure. The RuvB hexamer acts as an ATP-dependent pump, pulling dsDNA into and through the RuvAB complex. RuvB forms 2 homohexamers on either side of HJ DNA bound by 1 or 2 RuvA tetramers; 4 subunits per hexamer contact DNA at a time. Coordinated motions by a converter formed by DNA-disengaged RuvB subunits stimulates ATP hydrolysis and nucleotide exchange. Immobilization of the converter enables RuvB to convert the ATP-contained energy into a lever motion, pulling 2 nucleotides of DNA out of the RuvA tetramer per ATP hydrolyzed, thus driving DNA branch migration. The RuvB motors rotate together with the DNA substrate, which together with the progressing nucleotide cycle form the mechanistic basis for DNA recombination by continuous HJ branch migration. Branch migration allows RuvC to scan DNA until it finds its consensus sequence, where it cleaves and resolves cruciform DNA. The sequence is that of Holliday junction branch migration complex subunit RuvB from Bradyrhizobium sp. (strain BTAi1 / ATCC BAA-1182).